We begin with the raw amino-acid sequence, 269 residues long: Diaminopimelate epimerase (269 aa).

The substrate site is built by Asn-13, Gln-47, and Asn-65. Catalysis depends on Cys-74, which acts as the Proton donor. Substrate-binding positions include 75-76 (GN), Asn-149, Asn-182, and 200-201 (ER). Residue Cys-209 is the Proton acceptor of the active site. 210-211 (GT) contributes to the substrate binding site.

This sequence belongs to the diaminopimelate epimerase family. As to quaternary structure, homodimer.

It localises to the cytoplasm. The catalysed reaction is (2S,6S)-2,6-diaminopimelate = meso-2,6-diaminopimelate. It participates in amino-acid biosynthesis; L-lysine biosynthesis via DAP pathway; DL-2,6-diaminopimelate from LL-2,6-diaminopimelate: step 1/1. Catalyzes the stereoinversion of LL-2,6-diaminopimelate (L,L-DAP) to meso-diaminopimelate (meso-DAP), a precursor of L-lysine and an essential component of the bacterial peptidoglycan. The sequence is that of Diaminopimelate epimerase from Erythrobacter litoralis (strain HTCC2594).